The following is a 153-amino-acid chain: 6,7-dimethyl-8-ribityllumazine synthase (153 aa).

5-amino-6-(D-ribitylamino)uracil is bound by residues Phe-22, Ala-56 to Glu-58, and Cys-80 to Ile-82. (2S)-2-hydroxy-3-oxobutyl phosphate is bound at residue Ala-85–Thr-86. The Proton donor role is filled by His-88. Phe-113 serves as a coordination point for 5-amino-6-(D-ribitylamino)uracil. Residue Arg-127 coordinates (2S)-2-hydroxy-3-oxobutyl phosphate.

Belongs to the DMRL synthase family.

It carries out the reaction (2S)-2-hydroxy-3-oxobutyl phosphate + 5-amino-6-(D-ribitylamino)uracil = 6,7-dimethyl-8-(1-D-ribityl)lumazine + phosphate + 2 H2O + H(+). Its pathway is cofactor biosynthesis; riboflavin biosynthesis; riboflavin from 2-hydroxy-3-oxobutyl phosphate and 5-amino-6-(D-ribitylamino)uracil: step 1/2. Catalyzes the formation of 6,7-dimethyl-8-ribityllumazine by condensation of 5-amino-6-(D-ribitylamino)uracil with 3,4-dihydroxy-2-butanone 4-phosphate. This is the penultimate step in the biosynthesis of riboflavin. This is 6,7-dimethyl-8-ribityllumazine synthase from Endomicrobium trichonymphae.